We begin with the raw amino-acid sequence, 325 residues long: Gamma-hemolysin component B (325 aa).

An N-terminal signal peptide occupies residues 1-25 (MNMNKLVKSSVATSMALLLLSNTAN).

It belongs to the aerolysin family. As to quaternary structure, toxicity requires sequential binding and synergistic association of a class S and a class F component which form heterooligomeric complexes. HlgB (class F) associates with either hlgA thus forming an AB toxin or with hlgC thus forming a CB toxin. Interacts with host AMFR.

Toxin that seems to act by forming pores in the membrane of the cell. Has a hemolytic and a leucotoxic activity. Promotes host AMFR-mediated inflammation by mediating 'Lys-27'-linked ubiquitination of TAB3, TAK1-TAB3 complex formation and phosphorylation of TAK1/MAP3K7. In turn, activates host NF-kappa-B signaling pathway. The polypeptide is Gamma-hemolysin component B (hlgB) (Staphylococcus aureus (strain MRSA252)).